Reading from the N-terminus, the 272-residue chain is Probable ribosomal RNA small subunit methyltransferase A (272 aa).

6 residues coordinate S-adenosyl-L-methionine: Asn-23, Leu-25, Gly-50, Glu-71, Asp-95, and Asn-110.

This sequence belongs to the class I-like SAM-binding methyltransferase superfamily. rRNA adenine N(6)-methyltransferase family. RsmA subfamily.

Its subcellular location is the cytoplasm. Specifically dimethylates two adjacent adenosines in the loop of a conserved hairpin near the 3'-end of 16S rRNA in the 30S particle. May play a critical role in biogenesis of 30S subunits. This Thermococcus onnurineus (strain NA1) protein is Probable ribosomal RNA small subunit methyltransferase A.